Consider the following 123-residue polypeptide: Cytochrome c-555 (123 aa).

The N-terminal stretch at 1 to 27 (MDHKKTSIRTTALAALVLGAVAAPAFS) is a signal peptide. Residues Cys46, Cys49, His50, and Met86 each contribute to the heme c site.

Post-translationally, binds 1 heme c group covalently per subunit.

The sequence is that of Cytochrome c-555 from Methylococcus capsulatus (strain ATCC 33009 / NCIMB 11132 / Bath).